Consider the following 225-residue polypeptide: 2-C-methyl-D-erythritol 4-phosphate cytidylyltransferase (225 aa).

It belongs to the IspD/TarI cytidylyltransferase family. IspD subfamily.

The catalysed reaction is 2-C-methyl-D-erythritol 4-phosphate + CTP + H(+) = 4-CDP-2-C-methyl-D-erythritol + diphosphate. Its pathway is isoprenoid biosynthesis; isopentenyl diphosphate biosynthesis via DXP pathway; isopentenyl diphosphate from 1-deoxy-D-xylulose 5-phosphate: step 2/6. Its function is as follows. Catalyzes the formation of 4-diphosphocytidyl-2-C-methyl-D-erythritol from CTP and 2-C-methyl-D-erythritol 4-phosphate (MEP). This chain is 2-C-methyl-D-erythritol 4-phosphate cytidylyltransferase, found in Haemophilus influenzae (strain PittGG).